Here is a 358-residue protein sequence, read N- to C-terminus: DNA replication and repair protein RecF (358 aa).

Residue 30–37 participates in ATP binding; sequence GNNGSGKT.

This sequence belongs to the RecF family.

It is found in the cytoplasm. Its function is as follows. The RecF protein is involved in DNA metabolism; it is required for DNA replication and normal SOS inducibility. RecF binds preferentially to single-stranded, linear DNA. It also seems to bind ATP. This chain is DNA replication and repair protein RecF, found in Histophilus somni (strain 2336) (Haemophilus somnus).